Reading from the N-terminus, the 325-residue chain is Small ribosomal subunit protein uS4m (325 aa).

In terms of domain architecture, S4 RNA-binding spans 146-209; sequence KRIDMILLRS…HKQNLIHRLK (64 aa).

The protein belongs to the universal ribosomal protein uS4 family.

It localises to the mitochondrion. This chain is Small ribosomal subunit protein uS4m (mrps4), found in Dictyostelium citrinum (Slime mold).